A 727-amino-acid chain; its full sequence is Ubiquitin carboxyl-terminal hydrolase BAP1 (727 aa).

The UCH catalytic domain maps to 4–235 (GWLELESDPG…IRFNLMAVVP (232 aa)). Positions 56–60 (RRSRR) match the Arg-finger motif motif. Cys-91 serves as the catalytic Nucleophile. The active-site Proton donor is the His-169. Residues 273-351 (THKSQESQLP…SLNGVPPTPT (79 aa)) form a disordered region. Position 292 is a phosphoserine (Ser-292). Residues 320–330 (CPQTTTHSPPS) show a composition bias toward polar residues. The HBM-like motif signature appears at 363 to 366 (NHNY). Ser-369 and Ser-394 each carry phosphoserine. 2 disordered regions span residues 372–435 (QEEE…DGQL) and 462–522 (SIKT…SPVT). Residues 394–407 (SDDEEDYEDEEEDV) show a composition bias toward acidic residues. 2 stretches are compositionally biased toward polar residues: residues 426 to 435 (SLSNSSDGQL) and 478 to 522 (THSQ…SPVT). Thr-491 carries the phosphothreonine modification. Phosphoserine occurs at positions 519, 535, 583, and 595. The segment at 573-622 (LTEGGKGSSPSTRSSQGSQGSSSLEEKEVVEVTDSRDKSGLNRSSEPLSG) is disordered. The segment covering 580 to 595 (SSPSTRSSQGSQGSSS) has biased composition (low complexity). Residues 594–719 (SSLEEKEVVE…QRKPDRRKRS (126 aa)) form an interaction with BRCA1 region. Residues 596–612 (LEEKEVVEVTDSRDKSG) show a composition bias toward basic and acidic residues. Positions 628–659 (KELLALLKCVEAEIANYEACLKEEVEKRKKFK) form a coiled coil. Residues 640 to 684 (EIANYEACLKEEVEKRKKFKIDDQRRTHNYDEFICTFISMLAQEG) are interaction with YY1. Residues 668–696 (NYDEFICTFISMLAQEGMLANLVEQNISV) enclose the ULD domain. The segment at 697 to 699 (RRR) is interaction with nucleosomal DNA forming a DNA clamp with ASXL1. The short motif at 697-720 (RRRQGVSIGRLHKQRKPDRRKRSR) is the Classical bipartite Nuclear localization signal (NLS) element. The disordered stretch occupies residues 702 to 727 (VSIGRLHKQRKPDRRKRSRPYKAKRQ). A positively charged C-terminal extension (CTE) region spans residues 711–727 (RKPDRRKRSRPYKAKRQ). A Nuclear localization signal motif is present at residues 715–720 (RRKRSR). A Non-classical PY-nuclear localization signal (PY-NLS) motif is present at residues 715–722 (RRKRSRPY).

The protein belongs to the peptidase C12 family. BAP1 subfamily. In terms of assembly, core component of the polycomb repressive deubiquitinase (PR-DUB) complex, at least composed of BAP1, one of ASXL1, ASXL2 or (probably) ASXL3, and one of MBD5 or MBD6. The PR-DUB core associates with a number of accessory proteins, including FOXK1, FOXK2, KDM1B, HCFC1, YY1 and OGT; KDM1B specifically associates with ASXL2 PR-DUB complexes. The BAP1 deubiquitinase activity is not required for PR-DUB assembly. Homodimerize (via coiled-coil hinge-region between the UCH and ULD domains) to mediate assembly of 2 copies of the BAP1-ASXL heterodimer into a bisymmetric tetramer; dimerization enhances association with nucleosomes. The PR-DUB complex associates with nucleosomes to mediate deubiquitination of 'lys-120' of histone H2AK118ub1 substrates; the association requires the positively charged C-terminal tail of BAP1. Interacts (via ULD domain) with ASXL1 (via DEUBAD domain); the interaction is direct and forms a ubiquitin binding cleft. The interaction with ASXL1 stabilizes BAP1 but is not required for nucleosome binding. Associates (via C-terminus) with nucleosome and chromatosome complexes through direct interaction with DNA and the histone3/4 dimer; this association displaces the histone-2A C-terminal tail, extending and orienting the H2AK118ub1 substrate towards the BAP1 deubiquitinase active site. Also interacts (via arginine finger) directly with the histone H2A-H2B acidic patch; this interaction is not critical for nucleosome-chromatosome association but may play a role in orienting the H2AK118ub1 substrate towards the PR-DUB complex active site. Interacts with BRCA1 (via the RING finger). Interacts (via HBM-like motif) with HCFC1. Interacts (via a C-terminal region overlapping the ULD domain) with YY1; the interaction is direct and requires the interaction with HCFC1. Interacts (when phosphorylated at Thr-491) with FOXK1. Interacts (when phosphorylated at Thr-491) with FOXK2; leading to recruitment of the PR-DUB complex and repression of FOXK2 target genes. Interacts (via non-classical PY-NLS) with TNPO1/transportin-1 (via HEAT repeats 8-12); the interaction is direct, mediates BAP1 nuclear localization and disrupts BAP1 homodimerization. Interacts (via C-terminus) with KPNA1/importin alpha5 and KPNA2/importin alpha1; these interactions can contribute to BAP1 nuclear localization but are less important than the interaction with TNPO1/transportin-1. The interaction with TNPO1/transportin-1 disrupts homodimerization and blocks ubiquitination by UBE2O. In terms of processing, ubiquitinated: monoubiquitinated at multiple sites within its nuclear localization signal (NLS) BY UBE2O, leading to cytoplasmic retention. Able to mediate autodeubiquitination via intramolecular interactions to counteract cytoplasmic retention. Monoubiquitinated on at least 4 sites near or within its PY-NLS.

It localises to the cytoplasm. It is found in the nucleus. The protein localises to the chromosome. It carries out the reaction Thiol-dependent hydrolysis of ester, thioester, amide, peptide and isopeptide bonds formed by the C-terminal Gly of ubiquitin (a 76-residue protein attached to proteins as an intracellular targeting signal).. Deubiquitinating enzyme that plays a key role in chromatin by mediating deubiquitination of histone H2A and HCFC1. Catalytic component of the polycomb repressive deubiquitinase (PR-DUB) complex, a complex that specifically mediates deubiquitination of histone H2A monoubiquitinated at 'Lys-120' (H2AK119ub1). Does not deubiquitinate monoubiquitinated histone H2B. The PR-DUB complex is an epigenetic regulator of gene expression and acts as a transcriptional coactivator, affecting genes involved in development, cell communication, signaling, cell proliferation and cell viability. Antagonizes PRC1 mediated H2AK119ub1 monoubiquitination. As part of the PR-DUB complex, associates with chromatin enriched in histone marks H3K4me1, H3K4me3, and H3K27Ac, but not in H3K27me3. Acts as a regulator of cell growth by mediating deubiquitination of HCFC1 N-terminal and C-terminal chains, with some specificity toward 'Lys-48'-linked polyubiquitin chains compared to 'Lys-63'-linked polyubiquitin chains. Deubiquitination of HCFC1 does not lead to increase stability of HCFC1. Interferes with the BRCA1 and BARD1 heterodimer activity by inhibiting their ability to mediate ubiquitination and autoubiquitination. It however does not mediate deubiquitination of BRCA1 and BARD1. Able to mediate autodeubiquitination via intramolecular interactions to counteract monoubiquitination at the nuclear localization signal (NLS), thereby protecting it from cytoplasmic sequestration. Acts as a tumor suppressor. Negatively regulates epithelial-mesenchymal transition (EMT) of trophoblast stem cells during placental development by regulating genes involved in epithelial cell integrity, cell adhesion and cytoskeletal organization. The chain is Ubiquitin carboxyl-terminal hydrolase BAP1 (Bap1) from Rattus norvegicus (Rat).